Here is a 377-residue protein sequence, read N- to C-terminus: 3-(aryl)acrylate reductase (377 aa).

FAD-binding positions include 121–130 (FALTEPGAGS), 154–156 (FIT), Arg-266, Gln-277, and 334–338 (QIHGG). Glu-361 serves as the catalytic Proton acceptor. 363–365 (TSE) provides a ligand contact to FAD.

Belongs to the acyl-CoA dehydrogenase family. FAD serves as cofactor.

It carries out the reaction 3-phenylpropanoate + oxidized [electron-transfer flavoprotein] + H(+) = (E)-cinnamate + reduced [electron-transfer flavoprotein]. It catalyses the reaction phloretate + oxidized [electron-transfer flavoprotein] + H(+) = (E)-4-coumarate + reduced [electron-transfer flavoprotein]. The catalysed reaction is indole-3-propanoate + oxidized [electron-transfer flavoprotein] + H(+) = (E)-3-(indol-3-yl)acrylate + reduced [electron-transfer flavoprotein]. It functions in the pathway amino-acid degradation. Functionally, essential for the reductive metabolism of L-phenylalanine, L-tyrosine and L-tryptophan. Catalyzes the reduction of phenylacrylic acid to phenylpropionic acid, 4-hydroxy-phenylacrylic acid to 4-hydroxy-phenylpropionic acid, and indoleacrylic acid to indolepropionic acid. The chain is 3-(aryl)acrylate reductase from Clostridium sporogenes (strain ATCC 15579).